We begin with the raw amino-acid sequence, 275 residues long: Biotin synthase (275 aa).

The Radical SAM core domain maps to 1-217 (MLCAICNVSS…DTAKTLPQCR (217 aa)). [4Fe-4S] cluster-binding residues include Cys13, Cys17, and Cys20. [2Fe-2S] cluster is bound by residues Cys57, Cys92, Cys150, and Arg217.

It belongs to the radical SAM superfamily. Biotin synthase family. In terms of assembly, homodimer. [4Fe-4S] cluster serves as cofactor. Requires [2Fe-2S] cluster as cofactor.

The enzyme catalyses (4R,5S)-dethiobiotin + (sulfur carrier)-SH + 2 reduced [2Fe-2S]-[ferredoxin] + 2 S-adenosyl-L-methionine = (sulfur carrier)-H + biotin + 2 5'-deoxyadenosine + 2 L-methionine + 2 oxidized [2Fe-2S]-[ferredoxin]. Its pathway is cofactor biosynthesis; biotin biosynthesis; biotin from 7,8-diaminononanoate: step 2/2. In terms of biological role, catalyzes the conversion of dethiobiotin (DTB) to biotin by the insertion of a sulfur atom into dethiobiotin via a radical-based mechanism. This Campylobacter fetus subsp. fetus (strain 82-40) protein is Biotin synthase.